A 197-amino-acid polypeptide reads, in one-letter code: dITP/XTP pyrophosphatase (197 aa).

Residue 9-14 participates in substrate binding; that stretch reads SNNAGK. Catalysis depends on aspartate 70, which acts as the Proton acceptor. Residue aspartate 70 coordinates Mg(2+). Substrate is bound by residues serine 71, 153–156, lysine 176, and 181–182; these read FGYD and HR.

Belongs to the HAM1 NTPase family. As to quaternary structure, homodimer. Mg(2+) is required as a cofactor.

It catalyses the reaction XTP + H2O = XMP + diphosphate + H(+). It carries out the reaction dITP + H2O = dIMP + diphosphate + H(+). The enzyme catalyses ITP + H2O = IMP + diphosphate + H(+). Pyrophosphatase that catalyzes the hydrolysis of nucleoside triphosphates to their monophosphate derivatives, with a high preference for the non-canonical purine nucleotides XTP (xanthosine triphosphate), dITP (deoxyinosine triphosphate) and ITP. Seems to function as a house-cleaning enzyme that removes non-canonical purine nucleotides from the nucleotide pool, thus preventing their incorporation into DNA/RNA and avoiding chromosomal lesions. The sequence is that of dITP/XTP pyrophosphatase from Chromobacterium violaceum (strain ATCC 12472 / DSM 30191 / JCM 1249 / CCUG 213 / NBRC 12614 / NCIMB 9131 / NCTC 9757 / MK).